The chain runs to 416 residues: Enterobactin exporter EntS (416 aa).

Residues 1-21 (MNRQSWLLNLSLLKTHPAFRA) are Cytoplasmic-facing. Residues 22–42 (VFLARFISIVSLGLLGVAVPV) form a helical membrane-spanning segment. Residues 43-55 (QIQMMTHSTWQVG) are Periplasmic-facing. A helical transmembrane segment spans residues 56-76 (LSVTLTGSAMFVGLMVGGVLA). Topologically, residues 77–83 (DRYERKK) are cytoplasmic. A helical membrane pass occupies residues 84–104 (VILLARGTCGIGFIGLCLNAL). Topologically, residues 105-109 (LPEPS) are periplasmic. The helical transmembrane segment at 110 to 130 (LLAIYLLGLWDGFFASLGVTA) threads the bilayer. Residues 131–156 (LLAATPALVGRENLMQAGAITMLTVR) lie on the Cytoplasmic side of the membrane. A helical transmembrane segment spans residues 157 to 177 (LGSVISPMLGGVLLATGGVAW). Position 178 (Asn-178) is a topological domain, periplasmic. Residues 179-199 (YGLAAAGTFITLLPLLSLPAL) traverse the membrane as a helical segment. The Cytoplasmic portion of the chain corresponds to 200-218 (PPPPQPREHPLKSLLAAFR). A helical membrane pass occupies residues 219 to 239 (FLLSSPLIGGIALLGGLLTMA). The Periplasmic portion of the chain corresponds to 240-256 (SAVRVLYPALAINWHMS). A helical transmembrane segment spans residues 257–277 (AAQIGLLYAAIPLGAAVGALT). Residues 278–287 (SGQLAHSVRP) lie on the Cytoplasmic side of the membrane. A helical transmembrane segment spans residues 288-307 (GLLMLVSTVGSFLAIGVFGL). The Periplasmic segment spans residues 308-313 (MPVWLL). A helical transmembrane segment spans residues 314 to 336 (GVICLALFGWLSAISSLLQYTLL). Over 337 to 356 (QTQTPEAMLGRINGLWTAQN) the chain is Cytoplasmic. The chain crosses the membrane as a helical span at residues 357–377 (VTGDAIGAALLGGLGAMMTPV). Ala-378 is a topological domain (periplasmic). The helical transmembrane segment at 379 to 399 (SASVSGFGLVIVGLLLMLLLG) threads the bilayer. The Cytoplasmic segment spans residues 400 to 416 (ELRRFRQPPPVPDGAPL).

The protein belongs to the major facilitator superfamily. EntS (TC 2.A.1.38) family.

The protein localises to the cell inner membrane. Component of an export pathway for enterobactin. This Citrobacter koseri (strain ATCC BAA-895 / CDC 4225-83 / SGSC4696) protein is Enterobactin exporter EntS.